The following is a 1026-amino-acid chain: Multidrug resistance protein MdtC (1026 aa).

Over 1–6 (MRFFAL) the chain is Cytoplasmic. A helical transmembrane segment spans residues 7–29 (FIYRPVATILIAAAITLCGILGF). Residues 30-335 (RLLPVAPLPQ…TIRASLQEVE (306 aa)) are Periplasmic-facing. A helical membrane pass occupies residues 336–353 (ETLAISVALVILVVFLFL). Over 354-359 (RSGRAT) the chain is Cytoplasmic. The helical transmembrane segment at 360 to 379 (LIPAVAVPVSLIGTFAAMYL) threads the bilayer. Topologically, residues 380-388 (CGFSLNNLS) are periplasmic. A helical transmembrane segment spans residues 389-411 (LMALTIATGFVVDDAIVVLENIA). The Cytoplasmic portion of the chain corresponds to 412–430 (RHLEAGMKPLQAALQGTRE). The chain crosses the membrane as a helical span at residues 431-453 (VGFTVISMSLSLVAVFLPLLLMG). The Periplasmic segment spans residues 454–467 (GLPGRLLREFAVTL). A helical transmembrane segment spans residues 468–490 (SVAIGISLVVSLTLTPMMCGWML). The Cytoplasmic portion of the chain corresponds to 491–852 (KSSKPRTQPR…QVFQQTMNSQ (362 aa)). The helical transmembrane segment at 853–875 (LILIVAAIATVYIVLGILYESYV) threads the bilayer. The Periplasmic portion of the chain corresponds to 876-894 (HPLTILSTLPSAGVGALLA). Residues 895–917 (LELFNAPFSLIALIGIMLLIGIV) traverse the membrane as a helical segment. Over 918–947 (KKNAIMMVDFALEAQRSGGLTPEQAIFQAC) the chain is Cytoplasmic. A helical membrane pass occupies residues 948 to 970 (LLRFRPIMMTTLAALFGALPLVL). Over 971-984 (SGGDGSELRQPLGI) the chain is Periplasmic. Residues 985 to 1007 (TIVGGLVMSQLLTLYTTPVVYLF) form a helical membrane-spanning segment. Topologically, residues 1008–1026 (FDRLRLRFSRKNSKPVVEI) are cytoplasmic.

This sequence belongs to the resistance-nodulation-cell division (RND) (TC 2.A.6) family. MdtC subfamily. As to quaternary structure, part of a tripartite efflux system composed of MdtA, MdtB and MdtC. MdtC forms a heteromultimer with MdtB.

The protein resides in the cell inner membrane. This Salmonella typhimurium (strain LT2 / SGSC1412 / ATCC 700720) protein is Multidrug resistance protein MdtC.